The primary structure comprises 236 residues: MTKQLKLSALFVALLASGTAVAGEASVQGYTVSGQSNEIVRNNYGECWKNAYFDKASQGRVECGDAVAVPEPEPAPVAVVEQAPQYVDETISLSAKTLFGFDKDSLRAEAQDNLKVLAQRLSRTNVQSVRVEGHTDFMGSEKYNQALSERRAYVVANNLVSNGVPASRISAVGLGESQAQMTQVCQAEVAKLGAKASKAKKREALIACIEPDRRVDVKIRSIVTRQVVPARNHHQH.

The N-terminal stretch at 1–22 (MTKQLKLSALFVALLASGTAVA) is a signal peptide. 4 tandem repeats follow at residues 69 to 70 (VP), 71 to 72 (EP), 73 to 74 (EP), and 75 to 76 (AP). The interval 69 to 76 (VPEPEPAP) is 4 X 2 AA tandem repeats of X-P. The region spanning 86–223 (YVDETISLSA…RVDVKIRSIV (138 aa)) is the OmpA-like domain. A disulfide bridge connects residues Cys-185 and Cys-208.

Belongs to the outer membrane OOP (TC 1.B.6) superfamily.

The protein localises to the cell outer membrane. This Neisseria gonorrhoeae protein is Outer membrane protein P.III.